The chain runs to 459 residues: ATP synthase subunit beta (459 aa).

149 to 156 (GGAGVGKT) is an ATP binding site.

The protein belongs to the ATPase alpha/beta chains family. As to quaternary structure, F-type ATPases have 2 components, CF(1) - the catalytic core - and CF(0) - the membrane proton channel. CF(1) has five subunits: alpha(3), beta(3), gamma(1), delta(1), epsilon(1). CF(0) has three main subunits: a(1), b(2) and c(9-12). The alpha and beta chains form an alternating ring which encloses part of the gamma chain. CF(1) is attached to CF(0) by a central stalk formed by the gamma and epsilon chains, while a peripheral stalk is formed by the delta and b chains.

Its subcellular location is the cell inner membrane. The catalysed reaction is ATP + H2O + 4 H(+)(in) = ADP + phosphate + 5 H(+)(out). Produces ATP from ADP in the presence of a proton gradient across the membrane. The catalytic sites are hosted primarily by the beta subunits. The protein is ATP synthase subunit beta of Pseudomonas syringae pv. syringae (strain B728a).